The following is a 150-amino-acid chain: D-aminoacyl-tRNA deacylase (150 aa).

Residues 138–139 carry the Gly-cisPro motif, important for rejection of L-amino acids motif; the sequence is GP.

The protein belongs to the DTD family. In terms of assembly, homodimer.

The protein localises to the cytoplasm. It carries out the reaction glycyl-tRNA(Ala) + H2O = tRNA(Ala) + glycine + H(+). It catalyses the reaction a D-aminoacyl-tRNA + H2O = a tRNA + a D-alpha-amino acid + H(+). An aminoacyl-tRNA editing enzyme that deacylates mischarged D-aminoacyl-tRNAs. Also deacylates mischarged glycyl-tRNA(Ala), protecting cells against glycine mischarging by AlaRS. Acts via tRNA-based rather than protein-based catalysis; rejects L-amino acids rather than detecting D-amino acids in the active site. By recycling D-aminoacyl-tRNA to D-amino acids and free tRNA molecules, this enzyme counteracts the toxicity associated with the formation of D-aminoacyl-tRNA entities in vivo and helps enforce protein L-homochirality. The sequence is that of D-aminoacyl-tRNA deacylase from Flavobacterium psychrophilum (strain ATCC 49511 / DSM 21280 / CIP 103535 / JIP02/86).